Here is a 149-residue protein sequence, read N- to C-terminus: Calmodulin (149 aa).

Alanine 2 bears the N-acetylalanine mark. EF-hand domains lie at 8–43 (EQIAEFKEAFSLFDKDGDGTITTKELGTVMRSLGQN), 44–79 (PTEAELQDMINEVDADGNGTIDFPEFLTMMARKMKD), 81–116 (DSEEEIIEAFKVFDKDGNGFISAAELRHIMTNLGEK), and 117–149 (LTDEEVDEMIREADIDGDGQINYEEFVKMMMAK). Positions 21, 23, 25, 27, 32, 57, 59, 61, 63, 68, 94, 96, 98, and 105 each coordinate Ca(2+). An N6,N6,N6-trimethyllysine modification is found at lysine 116. Ca(2+) is bound by residues aspartate 130, aspartate 132, aspartate 134, glutamine 136, and glutamate 141.

Belongs to the calmodulin family.

In terms of biological role, calmodulin mediates the control of a large number of enzymes, ion channels and other proteins by Ca(2+). Among the enzymes to be stimulated by the calmodulin-Ca(2+) complex are a number of protein kinases and phosphatases. The chain is Calmodulin from Macrocystis pyrifera (Giant kelp).